The primary structure comprises 900 residues: 3'-5' exonuclease DinG (900 aa).

The Exonuclease domain occupies 8–161 (VVDLETTGNQ…DEDATTTALL (154 aa)). Residues 241 to 496 (SEVVKSLNLT…KAIDKLEQQR (256 aa)) enclose the Helicase ATP-binding domain. 276–283 (APLGSGKS) provides a ligand contact to ATP. Positions 448–451 (DEAH) match the DEAH box motif. The Helicase C-terminal domain maps to 713 to 893 (DYIQEYVTIT…QFSKLVNKIQ (181 aa)).

This sequence belongs to the helicase family. DinG subfamily. Type 2 sub-subfamily.

Functionally, 3'-5' exonuclease. The protein is 3'-5' exonuclease DinG of Staphylococcus haemolyticus (strain JCSC1435).